Consider the following 378-residue polypeptide: Transmembrane protein adipocyte-associated 1 homolog (378 aa).

N-linked (GlcNAc...) asparagine glycosylation is found at Asn-16, Asn-25, and Asn-36. The next 7 helical transmembrane spans lie at 61–81 (VMLLIPNVAFLVFLMWKLPSA), 88–108 (TSSPIFVAFYILVFVVAAVGI), 136–156 (FFLLAIELSVIILGLAFGHLE), 164–184 (VLAITAVLSLAYSITQGTLEI), 205–225 (HFWLASSCFFFLVYSLIVILP), 247–267 (ILALLNLVQGLGSALLCADII), and 278–298 (FLYFSVFAPLIYVTFLKGFFG). The disordered stretch occupies residues 316-335 (DSDVHLPHTSSSGLGRKDLD).

Belongs to the UPF0359 family.

The protein resides in the membrane. The chain is Transmembrane protein adipocyte-associated 1 homolog (tpra1) from Danio rerio (Zebrafish).